We begin with the raw amino-acid sequence, 201 residues long: Oligoribonuclease (201 aa).

The Exonuclease domain occupies 20 to 183 (LVWLDMEMTG…ADIHESIDEL (164 aa)). The active site involves tyrosine 141.

The protein belongs to the oligoribonuclease family.

Its subcellular location is the cytoplasm. 3'-to-5' exoribonuclease specific for small oligoribonucleotides. This chain is Oligoribonuclease, found in Burkholderia mallei (strain NCTC 10229).